The chain runs to 495 residues: Lysine--tRNA ligase (495 aa).

2 residues coordinate Mg(2+): E406 and E413.

Belongs to the class-II aminoacyl-tRNA synthetase family. As to quaternary structure, homodimer. Requires Mg(2+) as cofactor.

It localises to the cytoplasm. The catalysed reaction is tRNA(Lys) + L-lysine + ATP = L-lysyl-tRNA(Lys) + AMP + diphosphate. This Staphylococcus epidermidis (strain ATCC 35984 / DSM 28319 / BCRC 17069 / CCUG 31568 / BM 3577 / RP62A) protein is Lysine--tRNA ligase.